A 286-amino-acid polypeptide reads, in one-letter code: Phosphate import ATP-binding protein PstB (286 aa).

An ABC transporter domain is found at 40-281 (IAVRNLDFYY…PREQRTQEYI (242 aa)). 72–79 (GPSGCGKS) lines the ATP pocket.

This sequence belongs to the ABC transporter superfamily. Phosphate importer (TC 3.A.1.7) family. The complex is composed of two ATP-binding proteins (PstB), two transmembrane proteins (PstC and PstA) and a solute-binding protein (PstS).

The protein resides in the cell inner membrane. It catalyses the reaction phosphate(out) + ATP + H2O = ADP + 2 phosphate(in) + H(+). Part of the ABC transporter complex PstSACB involved in phosphate import. Responsible for energy coupling to the transport system. The chain is Phosphate import ATP-binding protein PstB from Granulibacter bethesdensis (strain ATCC BAA-1260 / CGDNIH1).